The chain runs to 825 residues: Penicillin-binding protein 1A (825 aa).

Over 1 to 6 (MKFIKR) the chain is Cytoplasmic. A helical; Signal-anchor for type II membrane protein membrane pass occupies residues 7-27 (LLVFSLICIILGVTTIFGFYF). The Periplasmic portion of the chain corresponds to 28-825 (YVKSDLPDVA…YSTSSGEELF (798 aa)). The interval 48 to 216 (MQVFSQDGKL…STMNPIYSVE (169 aa)) is transglycosylase. E86 serves as the catalytic Proton donor; for transglycosylase activity. The transpeptidase stretch occupies residues 413–752 (PRTQDGAITA…GKTALPAWVE (340 aa)). S471 (acyl-ester intermediate; for transpeptidase activity) is an active-site residue.

In the N-terminal section; belongs to the glycosyltransferase 51 family. The protein in the C-terminal section; belongs to the transpeptidase family.

The protein localises to the cell inner membrane. The enzyme catalyses [GlcNAc-(1-&gt;4)-Mur2Ac(oyl-L-Ala-gamma-D-Glu-L-Lys-D-Ala-D-Ala)](n)-di-trans,octa-cis-undecaprenyl diphosphate + beta-D-GlcNAc-(1-&gt;4)-Mur2Ac(oyl-L-Ala-gamma-D-Glu-L-Lys-D-Ala-D-Ala)-di-trans,octa-cis-undecaprenyl diphosphate = [GlcNAc-(1-&gt;4)-Mur2Ac(oyl-L-Ala-gamma-D-Glu-L-Lys-D-Ala-D-Ala)](n+1)-di-trans,octa-cis-undecaprenyl diphosphate + di-trans,octa-cis-undecaprenyl diphosphate + H(+). The catalysed reaction is Preferential cleavage: (Ac)2-L-Lys-D-Ala-|-D-Ala. Also transpeptidation of peptidyl-alanyl moieties that are N-acyl substituents of D-alanine.. The protein operates within cell wall biogenesis; peptidoglycan biosynthesis. Functionally, cell wall formation. Synthesis of cross-linked peptidoglycan from the lipid intermediates. The enzyme has a penicillin-insensitive transglycosylase N-terminal domain (formation of linear glycan strands) and a penicillin-sensitive transpeptidase C-terminal domain (cross-linking of the peptide subunits). The sequence is that of Penicillin-binding protein 1A (mrcA) from Vibrio cholerae serotype O1 (strain ATCC 39315 / El Tor Inaba N16961).